A 178-amino-acid chain; its full sequence is MSRIGNKVITLPAGVEIINKDNVVTVKGPKGQLTREFNKNIGITVEGTEVTVTRPNDSKEMKTIHGTTRANLNNMVVGVSEGFKKALEMRGVGYRAQLQGSKLVLSVGKSHQDEVEAPEGVTFEVPTPTTINVIGINKESVGQTAAYVRSLRSPEPYKGKGIRYVGEFVRRKEGKTGK.

It belongs to the universal ribosomal protein uL6 family. In terms of assembly, part of the 50S ribosomal subunit.

This protein binds to the 23S rRNA, and is important in its secondary structure. It is located near the subunit interface in the base of the L7/L12 stalk, and near the tRNA binding site of the peptidyltransferase center. The protein is Large ribosomal subunit protein uL6 of Streptococcus agalactiae serotype V (strain ATCC BAA-611 / 2603 V/R).